Here is a 247-residue protein sequence, read N- to C-terminus: E3 ubiquitin ligase TRIM40 (247 aa).

Residues 12–55 (CPICLDPLKEAVSTDCRHLFCRMCLIRHMDKASVSGVLSCPVCR) form an RING-type zinc finger. The B box-type zinc finger occupies 64–105 (GDNYICHTHQKRVCRFCESSRHLLCEECLQSPEHRAHTELSI). Residues Cys69, His72, Cys91, and His97 each contribute to the Zn(2+) site. The stretch at 111 to 148 (HYKERLNRRSRKLRKDLGDLQRLKAQEEKMLQALQVDW) forms a coiled coil.

Belongs to the TRIM/RBCC family. As to quaternary structure, interacts with NEDD8.

It catalyses the reaction S-ubiquitinyl-[E2 ubiquitin-conjugating enzyme]-L-cysteine + [acceptor protein]-L-lysine = [E2 ubiquitin-conjugating enzyme]-L-cysteine + N(6)-ubiquitinyl-[acceptor protein]-L-lysine.. Its function is as follows. E3 ubiquitin-protein ligase that plays a role in the limitation of the innate immune response. Mediates inhibition of the RLR signaling pathway by ubiquitinating RIGI and IFIH1 receptors, leading to their proteasomal degradation. Also promotes the neddylation of IKBKG/NEMO, stabilizing NFKBIA, and thereby inhibiting of NF-kappa-B nuclear translocation and activation. This chain is E3 ubiquitin ligase TRIM40 (Trim40), found in Rattus norvegicus (Rat).